We begin with the raw amino-acid sequence, 243 residues long: Phosphate-specific transport system accessory protein PhoU (243 aa).

The protein belongs to the PhoU family. Homodimer. Interacts with phosphate regulon transcriptional regulatory protein PhoB and ferric uptake regulation protein Fur.

Its subcellular location is the cytoplasm. Part of the phosphate (Pho) regulon, which plays a key role in phosphate homeostasis. Encoded together with proteins of the phosphate-specific transport (Pst) system in the polycistronic pstSCAB-phoU operon. PhoU is essential for the repression of the Pho regulon at high phosphate conditions. In this role, it may bind, possibly as a chaperone, to PhoR, PhoB or a PhoR-PhoB complex to promote dephosphorylation of phospho-PhoB, or inhibit formation of the PhoR-PhoB transitory complex. The polypeptide is Phosphate-specific transport system accessory protein PhoU (Edwardsiella tarda).